The following is a 355-amino-acid chain: tRNA uridine(34) hydroxylase (355 aa).

The Rhodanese domain occupies 146-240; the sequence is DDPDTVFVDM…YARQAKAQGL (95 aa). Residue Cys-200 is the Cysteine persulfide intermediate of the active site.

The protein belongs to the TrhO family.

The enzyme catalyses uridine(34) in tRNA + AH2 + O2 = 5-hydroxyuridine(34) in tRNA + A + H2O. Its function is as follows. Catalyzes oxygen-dependent 5-hydroxyuridine (ho5U) modification at position 34 in tRNAs. The protein is tRNA uridine(34) hydroxylase of Pectobacterium atrosepticum (strain SCRI 1043 / ATCC BAA-672) (Erwinia carotovora subsp. atroseptica).